Consider the following 239-residue polypeptide: Uridylate kinase (239 aa).

13–16 (KLSG) lines the ATP pocket. Gly55 serves as a coordination point for UMP. ATP is bound by residues Gly56 and Arg60. UMP-binding positions include Asp75 and 136–143 (TGNPFFTT). The ATP site is built by Thr163, Asn164, Tyr169, and Asp172.

Belongs to the UMP kinase family. As to quaternary structure, homohexamer.

The protein localises to the cytoplasm. It catalyses the reaction UMP + ATP = UDP + ADP. Its pathway is pyrimidine metabolism; CTP biosynthesis via de novo pathway; UDP from UMP (UMPK route): step 1/1. With respect to regulation, inhibited by UTP. In terms of biological role, catalyzes the reversible phosphorylation of UMP to UDP. The protein is Uridylate kinase of Neisseria meningitidis serogroup A / serotype 4A (strain DSM 15465 / Z2491).